A 583-amino-acid polypeptide reads, in one-letter code: Protein translocase subunit SecD (583 aa).

The next 6 membrane-spanning stretches (helical) occupy residues 7–27, 419–439, 446–468, 469–489, 511–531, and 538–558; these read FGVVLVVLAACSGFLFPTLQW, LVWGLCAVLLFMLVWYQEAGV, LLNLYIMFGVLSAFNLTLTLSSI, AGMILTIGMAVDANVVVFERI, FWAIMDSNVTTFIAALFLSVL, and GFAYSLAIGVVSSVFTALFVS.

This sequence belongs to the SecD/SecF family. SecD subfamily. Forms a complex with SecF. Part of the essential Sec protein translocation apparatus which comprises SecA, SecYEG and auxiliary proteins SecDF. Other proteins may also be involved.

It localises to the cell inner membrane. In terms of biological role, part of the Sec protein translocase complex. Interacts with the SecYEG preprotein conducting channel. SecDF uses the proton motive force (PMF) to complete protein translocation after the ATP-dependent function of SecA. The sequence is that of Protein translocase subunit SecD from Treponema pallidum (strain Nichols).